The sequence spans 49 residues: Large ribosomal subunit protein bL33B (49 aa).

The protein belongs to the bacterial ribosomal protein bL33 family.

In Lactobacillus helveticus (strain DPC 4571), this protein is Large ribosomal subunit protein bL33B.